Consider the following 158-residue polypeptide: 2-C-methyl-D-erythritol 2,4-cyclodiphosphate synthase (158 aa).

A divalent metal cation contacts are provided by Asp9 and His11. Residues 9 to 11 (DVH) and 35 to 36 (HS) contribute to the 4-CDP-2-C-methyl-D-erythritol 2-phosphate site. His43 serves as a coordination point for a divalent metal cation. 4-CDP-2-C-methyl-D-erythritol 2-phosphate is bound by residues 57–59 (DLG), 62–66 (FPDTD), 133–136 (TTTE), Phe140, and Arg143.

It belongs to the IspF family. As to quaternary structure, homotrimer. The cofactor is a divalent metal cation.

It catalyses the reaction 4-CDP-2-C-methyl-D-erythritol 2-phosphate = 2-C-methyl-D-erythritol 2,4-cyclic diphosphate + CMP. The protein operates within isoprenoid biosynthesis; isopentenyl diphosphate biosynthesis via DXP pathway; isopentenyl diphosphate from 1-deoxy-D-xylulose 5-phosphate: step 4/6. Functionally, involved in the biosynthesis of isopentenyl diphosphate (IPP) and dimethylallyl diphosphate (DMAPP), two major building blocks of isoprenoid compounds. Catalyzes the conversion of 4-diphosphocytidyl-2-C-methyl-D-erythritol 2-phosphate (CDP-ME2P) to 2-C-methyl-D-erythritol 2,4-cyclodiphosphate (ME-CPP) with a corresponding release of cytidine 5-monophosphate (CMP). This Desulfitobacterium hafniense (strain DSM 10664 / DCB-2) protein is 2-C-methyl-D-erythritol 2,4-cyclodiphosphate synthase.